Here is a 384-residue protein sequence, read N- to C-terminus: Queuine tRNA-ribosyltransferase (384 aa).

Residue D92 is the Proton acceptor of the active site. Residues 92-96 (DSGGF), D146, Q192, and G219 contribute to the substrate site. The tract at residues 250-256 (GVGTPAE) is RNA binding. The active-site Nucleophile is D269. An RNA binding; important for wobble base 34 recognition region spans residues 274 to 278 (TRNAR). Positions 307, 309, 312, and 338 each coordinate Zn(2+).

The protein belongs to the queuine tRNA-ribosyltransferase family. As to quaternary structure, homodimer. Within each dimer, one monomer is responsible for RNA recognition and catalysis, while the other monomer binds to the replacement base PreQ1. The cofactor is Zn(2+).

The catalysed reaction is 7-aminomethyl-7-carbaguanine + guanosine(34) in tRNA = 7-aminomethyl-7-carbaguanosine(34) in tRNA + guanine. It participates in tRNA modification; tRNA-queuosine biosynthesis. Its function is as follows. Catalyzes the base-exchange of a guanine (G) residue with the queuine precursor 7-aminomethyl-7-deazaguanine (PreQ1) at position 34 (anticodon wobble position) in tRNAs with GU(N) anticodons (tRNA-Asp, -Asn, -His and -Tyr). Catalysis occurs through a double-displacement mechanism. The nucleophile active site attacks the C1' of nucleotide 34 to detach the guanine base from the RNA, forming a covalent enzyme-RNA intermediate. The proton acceptor active site deprotonates the incoming PreQ1, allowing a nucleophilic attack on the C1' of the ribose to form the product. After dissociation, two additional enzymatic reactions on the tRNA convert PreQ1 to queuine (Q), resulting in the hypermodified nucleoside queuosine (7-(((4,5-cis-dihydroxy-2-cyclopenten-1-yl)amino)methyl)-7-deazaguanosine). This chain is Queuine tRNA-ribosyltransferase, found in Desulfosudis oleivorans (strain DSM 6200 / JCM 39069 / Hxd3) (Desulfococcus oleovorans).